The sequence spans 304 residues: uncharacterized protein (304 aa).

Positions methionine 1–alanine 25 are cleaved as a signal peptide. Residues proline 34–arginine 303 form the GP-PDE domain.

This is an uncharacterized protein from Mycobacterium tuberculosis (strain CDC 1551 / Oshkosh).